The following is a 123-amino-acid chain: Peptide methionine sulfoxide reductase MsrA (123 aa).

The active site involves Cys-8.

The protein belongs to the MsrA Met sulfoxide reductase family.

It carries out the reaction L-methionyl-[protein] + [thioredoxin]-disulfide + H2O = L-methionyl-(S)-S-oxide-[protein] + [thioredoxin]-dithiol. It catalyses the reaction [thioredoxin]-disulfide + L-methionine + H2O = L-methionine (S)-S-oxide + [thioredoxin]-dithiol. Its function is as follows. Has an important function as a repair enzyme for proteins that have been inactivated by oxidation. Catalyzes the reversible oxidation-reduction of methionine sulfoxide in proteins to methionine. The protein is Peptide methionine sulfoxide reductase MsrA of Thermoactinomyces vulgaris.